Here is a 113-residue protein sequence, read N- to C-terminus: MNETNKTLVGPSELPTASAVAPGPGTGARAWPVLVGFVLGAVVLSLLIALAAKCHLCRRYHASYRHRPLPETGRGGRPQVAEDEDDDGFIEDNYIQPGTGELGTEGSRDHFSL.

The segment at 1 to 22 (MNETNKTLVGPSELPTASAVAP) is disordered. Over 1–29 (MNETNKTLVGPSELPTASAVAPGPGTGAR) the chain is Extracellular. N-linked (GlcNAc...) asparagine glycosylation is present at N5. The chain crosses the membrane as a helical; Signal-anchor for type III membrane protein span at residues 30-50 (AWPVLVGFVLGAVVLSLLIAL). Over 51-113 (AAKCHLCRRY…TEGSRDHFSL (63 aa)) the chain is Cytoplasmic. The segment at 66 to 113 (HRPLPETGRGGRPQVAEDEDDDGFIEDNYIQPGTGELGTEGSRDHFSL) is disordered. Over residues 81–90 (AEDEDDDGFI) the composition is skewed to acidic residues.

It localises to the membrane. Its subcellular location is the early endosome. It is found in the recycling endosome. The protein localises to the cell membrane. May be involved in membrane trafficking between endosomes and plasma membrane. This Homo sapiens (Human) protein is Type III endosome membrane protein TEMP (C1orf210).